Reading from the N-terminus, the 206-residue chain is 2,3-bisphosphoglycerate-dependent phosphoglycerate mutase (206 aa).

Substrate-binding positions include 9–16 (RHGQSEWN), 22–23 (TG), Arg61, 88–91 (ERDY), Lys99, 115–116 (RR), and 159–160 (GN). Catalysis depends on His10, which acts as the Tele-phosphohistidine intermediate. Glu88 serves as the catalytic Proton donor/acceptor.

Belongs to the phosphoglycerate mutase family. BPG-dependent PGAM subfamily. In terms of assembly, homodimer.

The catalysed reaction is (2R)-2-phosphoglycerate = (2R)-3-phosphoglycerate. Its pathway is carbohydrate degradation; glycolysis; pyruvate from D-glyceraldehyde 3-phosphate: step 3/5. Functionally, catalyzes the interconversion of 2-phosphoglycerate and 3-phosphoglycerate. This is 2,3-bisphosphoglycerate-dependent phosphoglycerate mutase from Brucella ovis (strain ATCC 25840 / 63/290 / NCTC 10512).